A 507-amino-acid chain; its full sequence is ATP synthase subunit alpha (507 aa).

169–176 (GDRQTGKT) serves as a coordination point for ATP.

It belongs to the ATPase alpha/beta chains family. As to quaternary structure, F-type ATPases have 2 components, CF(1) - the catalytic core - and CF(0) - the membrane proton channel. CF(1) has five subunits: alpha(3), beta(3), gamma(1), delta(1), epsilon(1). CF(0) has three main subunits: a(1), b(2) and c(9-12). The alpha and beta chains form an alternating ring which encloses part of the gamma chain. CF(1) is attached to CF(0) by a central stalk formed by the gamma and epsilon chains, while a peripheral stalk is formed by the delta and b chains.

The protein localises to the cell inner membrane. The catalysed reaction is ATP + H2O + 4 H(+)(in) = ADP + phosphate + 5 H(+)(out). In terms of biological role, produces ATP from ADP in the presence of a proton gradient across the membrane. The alpha chain is a regulatory subunit. The sequence is that of ATP synthase subunit alpha from Magnetococcus marinus (strain ATCC BAA-1437 / JCM 17883 / MC-1).